Here is a 334-residue protein sequence, read N- to C-terminus: UPF0104 membrane protein MTH_378 (334 aa).

The next 8 membrane-spanning stretches (helical) occupy residues 7–27 (FYFFALSILLILALIIWMGPS), 33–53 (VYMADWMIIAIALLIHMGVLA), 120–140 (FFDLGIGGGLLLLAAVMVPVI), 142–162 (VIALFGAILSVLITYLIYLVN), 218–238 (VIFILSLLSWLMECLRLYLVF), 247–267 (FSAVIIIFLLANLVGILSALP), 277–297 (MAGLFVVFGVPGFLAGSIALV), and 300–320 (IISFWMVTALGAIFSSCYAGE).

It belongs to the UPF0104 family.

Its subcellular location is the cell membrane. The protein is UPF0104 membrane protein MTH_378 of Methanothermobacter thermautotrophicus (strain ATCC 29096 / DSM 1053 / JCM 10044 / NBRC 100330 / Delta H) (Methanobacterium thermoautotrophicum).